The following is a 175-amino-acid chain: Major pollen allergen Pha a 5.4 (175 aa).

Belongs to the Poa p IX/Phl p VI allergen family.

The protein is Major pollen allergen Pha a 5.4 of Phalaris aquatica (Canary grass).